A 503-amino-acid chain; its full sequence is Probable cytosol aminopeptidase (503 aa).

Mn(2+)-binding residues include Lys274 and Asp279. Residue Lys286 is part of the active site. Residues Asp297, Asp356, and Glu358 each coordinate Mn(2+). Residue Arg360 is part of the active site.

It belongs to the peptidase M17 family. The cofactor is Mn(2+).

It localises to the cytoplasm. It catalyses the reaction Release of an N-terminal amino acid, Xaa-|-Yaa-, in which Xaa is preferably Leu, but may be other amino acids including Pro although not Arg or Lys, and Yaa may be Pro. Amino acid amides and methyl esters are also readily hydrolyzed, but rates on arylamides are exceedingly low.. It carries out the reaction Release of an N-terminal amino acid, preferentially leucine, but not glutamic or aspartic acids.. In terms of biological role, presumably involved in the processing and regular turnover of intracellular proteins. Catalyzes the removal of unsubstituted N-terminal amino acids from various peptides. The chain is Probable cytosol aminopeptidase from Burkholderia lata (strain ATCC 17760 / DSM 23089 / LMG 22485 / NCIMB 9086 / R18194 / 383).